We begin with the raw amino-acid sequence, 238 residues long: Sugar fermentation stimulation protein homolog (238 aa).

The protein belongs to the SfsA family.

This is Sugar fermentation stimulation protein homolog from Klebsiella pneumoniae (strain 342).